A 142-amino-acid chain; its full sequence is Large ribosomal subunit protein uL13 (142 aa).

The protein belongs to the universal ribosomal protein uL13 family. As to quaternary structure, part of the 50S ribosomal subunit.

In terms of biological role, this protein is one of the early assembly proteins of the 50S ribosomal subunit, although it is not seen to bind rRNA by itself. It is important during the early stages of 50S assembly. The polypeptide is Large ribosomal subunit protein uL13 (Shewanella putrefaciens (strain CN-32 / ATCC BAA-453)).